The sequence spans 251 residues: Imidazole glycerol phosphate synthase subunit HisF (251 aa).

Active-site residues include D11 and D130.

This sequence belongs to the HisA/HisF family. Heterodimer of HisH and HisF.

It localises to the cytoplasm. It carries out the reaction 5-[(5-phospho-1-deoxy-D-ribulos-1-ylimino)methylamino]-1-(5-phospho-beta-D-ribosyl)imidazole-4-carboxamide + L-glutamine = D-erythro-1-(imidazol-4-yl)glycerol 3-phosphate + 5-amino-1-(5-phospho-beta-D-ribosyl)imidazole-4-carboxamide + L-glutamate + H(+). It participates in amino-acid biosynthesis; L-histidine biosynthesis; L-histidine from 5-phospho-alpha-D-ribose 1-diphosphate: step 5/9. Its function is as follows. IGPS catalyzes the conversion of PRFAR and glutamine to IGP, AICAR and glutamate. The HisF subunit catalyzes the cyclization activity that produces IGP and AICAR from PRFAR using the ammonia provided by the HisH subunit. The chain is Imidazole glycerol phosphate synthase subunit HisF from Flavobacterium johnsoniae (strain ATCC 17061 / DSM 2064 / JCM 8514 / BCRC 14874 / CCUG 350202 / NBRC 14942 / NCIMB 11054 / UW101) (Cytophaga johnsonae).